Here is a 115-residue protein sequence, read N- to C-terminus: Protein V2 (115 aa).

This sequence belongs to the geminiviridae protein AV2/V2 family. In terms of assembly, interacts with host SGS3.

The protein localises to the host cytoplasm. It is found in the host perinuclear region. Through its interaction with host SGS3, acts as a suppressor of RNA-mediated gene silencing, also known as post-transcriptional gene silencing (PTGS), a mechanism of plant viral defense that limits the accumulation of viral RNAs. The chain is Protein V2 from Tomato yellow leaf curl Sardinia virus (TYLCSV).